The chain runs to 127 residues: D-ribose pyranase (127 aa).

The active-site Proton donor is the histidine 20. Substrate is bound by residues aspartate 28, histidine 94, and 116 to 118; that span reads YSN.

This sequence belongs to the RbsD / FucU family. RbsD subfamily. In terms of assembly, homodecamer.

The protein resides in the cytoplasm. The enzyme catalyses beta-D-ribopyranose = beta-D-ribofuranose. It functions in the pathway carbohydrate metabolism; D-ribose degradation; D-ribose 5-phosphate from beta-D-ribopyranose: step 1/2. Catalyzes the interconversion of beta-pyran and beta-furan forms of D-ribose. This is D-ribose pyranase from Cutibacterium acnes (strain DSM 16379 / KPA171202) (Propionibacterium acnes).